Consider the following 121-residue polypeptide: Flagellar protein FliT (121 aa).

A required for homodimerization region spans residues 1–50 (MNHAPHLYFAWQQLVEKSQLMLRLATEEQWDELIASEMAYVNAVQEIAHL). Residues 60–98 (MQEQLRPMLRLILDNESKVKQLLQIRMDELAKLVGQSSV) form a fliD binding region.

It belongs to the FliT family. Homodimer. Interacts with FliD and FlhC.

It localises to the cytoplasm. Its subcellular location is the cytosol. In terms of biological role, dual-function protein that regulates the transcription of class 2 flagellar operons and that also acts as an export chaperone for the filament-capping protein FliD. As a transcriptional regulator, acts as an anti-FlhDC factor; it directly binds FlhC, thus inhibiting the binding of the FlhC/FlhD complex to class 2 promoters, resulting in decreased expression of class 2 flagellar operons. As a chaperone, effects FliD transition to the membrane by preventing its premature polymerization, and by directing it to the export apparatus. This Escherichia coli O8 (strain IAI1) protein is Flagellar protein FliT.